Here is a 161-residue protein sequence, read N- to C-terminus: 2-C-methyl-D-erythritol 2,4-cyclodiphosphate synthase (161 aa).

Asp-10 and His-12 together coordinate a divalent metal cation. Residues 10 to 12 and 36 to 37 contribute to the 4-CDP-2-C-methyl-D-erythritol 2-phosphate site; these read DVH and HS. An a divalent metal cation-binding site is contributed by His-44. Residues 58–60, 63–67, 102–108, 134–137, Phe-141, and Arg-144 each bind 4-CDP-2-C-methyl-D-erythritol 2-phosphate; these read DIG, FPDTD, AQAPKML, and TTTE.

The protein belongs to the IspF family. In terms of assembly, homotrimer. The cofactor is a divalent metal cation.

The enzyme catalyses 4-CDP-2-C-methyl-D-erythritol 2-phosphate = 2-C-methyl-D-erythritol 2,4-cyclic diphosphate + CMP. The protein operates within isoprenoid biosynthesis; isopentenyl diphosphate biosynthesis via DXP pathway; isopentenyl diphosphate from 1-deoxy-D-xylulose 5-phosphate: step 4/6. Its function is as follows. Involved in the biosynthesis of isopentenyl diphosphate (IPP) and dimethylallyl diphosphate (DMAPP), two major building blocks of isoprenoid compounds. Catalyzes the conversion of 4-diphosphocytidyl-2-C-methyl-D-erythritol 2-phosphate (CDP-ME2P) to 2-C-methyl-D-erythritol 2,4-cyclodiphosphate (ME-CPP) with a corresponding release of cytidine 5-monophosphate (CMP). This Shewanella loihica (strain ATCC BAA-1088 / PV-4) protein is 2-C-methyl-D-erythritol 2,4-cyclodiphosphate synthase.